The primary structure comprises 623 residues: Putative ABC transporter ATP-binding protein MG014 (623 aa).

The 310-residue stretch at 16–325 (LILAPFFTFA…YIVLGFILTS (310 aa)) folds into the ABC transmembrane type-1 domain. The next 6 helical transmembrane spans lie at 27 to 47 (IVID…VFSI), 81 to 101 (VLAT…LISI), 157 to 177 (FLRL…FAVT), 181 to 201 (DMSI…GILN), 266 to 286 (NIPF…LLVF), and 307 to 327 (IFAF…TSLT). One can recognise an ABC transporter domain in the interval 365 to 611 (LEFRNISFGL…CSLYQKMKES (247 aa)). ATP is bound at residue 400-407 (GPTGSGKS).

Belongs to the ABC transporter superfamily.

It localises to the cell membrane. The chain is Putative ABC transporter ATP-binding protein MG014 from Mycoplasma genitalium (strain ATCC 33530 / DSM 19775 / NCTC 10195 / G37) (Mycoplasmoides genitalium).